A 269-amino-acid chain; its full sequence is Chromosome-partitioning protein Spo0J (269 aa).

The stimulates ATPase activity of Soj by 8% stretch occupies residues 1–20 (MSRKPSGLGRGLEALLPKTG). The H-T-H motif DNA-binding region spans 137 to 156 (QEEVARRVGKARSTVANALR). A required for DNA-binding; may be responsible for dimerization region spans residues 223–269 (PSPLSLELSRHLGLPVRVVGGKKGKVVIQYRSLEELEALLRRLGYQA).

Belongs to the ParB family. Homodimer, probably via the C-terminal 46 residues. Dimerization of the N-terminal H-T-H region may require DNA-binding. Probably interacts with ATPase Soj.

Functionally, probably involved in chromosome partitioning. Binds to a plasmid centromere-like site parS. Stimulates the ATPase activity 10-fold of Soj; the first 20 residues may be responsible. The chain is Chromosome-partitioning protein Spo0J (spo0C) from Thermus thermophilus (strain ATCC BAA-163 / DSM 7039 / HB27).